The primary structure comprises 138 residues: uncharacterized protein (138 aa).

This is an uncharacterized protein from Escherichia coli (strain K12).